The following is a 520-amino-acid chain: Glutamate--cysteine ligase (520 aa).

Belongs to the glutamate--cysteine ligase type 1 family. Type 1 subfamily.

The catalysed reaction is L-cysteine + L-glutamate + ATP = gamma-L-glutamyl-L-cysteine + ADP + phosphate + H(+). It participates in sulfur metabolism; glutathione biosynthesis; glutathione from L-cysteine and L-glutamate: step 1/2. This chain is Glutamate--cysteine ligase, found in Leptospira interrogans serogroup Icterohaemorrhagiae serovar Lai (strain 56601).